Consider the following 775-residue polypeptide: Polyribonucleotide nucleotidyltransferase (775 aa).

Mg(2+) contacts are provided by Asp-487 and Asp-493. The KH domain maps to 554–613; sequence PKVEVVDVPEEKAPLIIGPGGSTVKKIYDETGVKVWVGEQGKVYLFVFPGGDVEKAKQMI. 2 consecutive S1 motif domains span residues 623 to 693 and 707 to 775; these read GAVY…IGIE and GDVY…TDDV.

Belongs to the polyribonucleotide nucleotidyltransferase family. Mg(2+) is required as a cofactor.

It localises to the cytoplasm. It carries out the reaction RNA(n+1) + phosphate = RNA(n) + a ribonucleoside 5'-diphosphate. In terms of biological role, involved in mRNA degradation. Catalyzes the phosphorolysis of single-stranded polyribonucleotides processively in the 3'- to 5'-direction. This is Polyribonucleotide nucleotidyltransferase from Aquifex aeolicus (strain VF5).